The following is a 329-amino-acid chain: Ferredoxin--NADP reductase 2 (329 aa).

Thr-18, Glu-37, Gln-45, Tyr-50, Val-90, Phe-124, Asp-285, and Ser-326 together coordinate FAD.

This sequence belongs to the ferredoxin--NADP reductase type 2 family. As to quaternary structure, homodimer. The cofactor is FAD.

The enzyme catalyses 2 reduced [2Fe-2S]-[ferredoxin] + NADP(+) + H(+) = 2 oxidized [2Fe-2S]-[ferredoxin] + NADPH. The chain is Ferredoxin--NADP reductase 2 from Bacillus mycoides (strain KBAB4) (Bacillus weihenstephanensis).